A 437-amino-acid polypeptide reads, in one-letter code: Sodium/bile acid cotransporter 4 (437 aa).

Topologically, residues 1 to 103 are extracellular; sequence MDGLDNTTRL…PPFWDTPLNH (103 aa). Residues asparagine 6, asparagine 20, and asparagine 26 are each glycosylated (N-linked (GlcNAc...) asparagine). Residues 16-84 are disordered; it reads LLPDNLTLSP…GGVAGQDSST (69 aa). Residues 21-50 are compositionally biased toward low complexity; that stretch reads LTLSPNASSTSASTLSPLPVTSSPSPGLSL. The helical transmembrane segment at 104-124 threads the bilayer; it reads GLNVFVGAALCITMLGLGCTV. At 125-140 the chain is on the cytoplasmic side; that stretch reads DVNHFGAHVRRPVGAL. A helical membrane pass occupies residues 141-161; the sequence is LAALCQFGFLPLLAFLLALAF. Residues 162 to 197 lie on the Extracellular side of the membrane; it reads KLDEVAAVAVLLCGCCPGGNLSNLMSLLVDGDMNLS. Residues asparagine 181 and asparagine 195 are each glycosylated (N-linked (GlcNAc...) asparagine). Residues 198–218 traverse the membrane as a helical segment; sequence IIMTISSTLLALVLMPLCLWI. The Cytoplasmic segment spans residues 219–233; it reads YSRAWINTPLVQLLP. A helical membrane pass occupies residues 234–254; the sequence is LGAVTLTLCSTLIPIGLGVFI. The Extracellular segment spans residues 255-267; the sequence is RYKYNRVADYIVK. A helical transmembrane segment spans residues 268 to 288; it reads VSLCSLLVTLVVLFIMTGTML. At 289-291 the chain is on the cytoplasmic side; the sequence is GPE. The helical transmembrane segment at 292-312 threads the bilayer; that stretch reads LLASIPAAVYVVAIFMPLAGY. Residues 313-360 are Extracellular-facing; the sequence is ASGYGLATLFHLPPNCKRTVCLETGSQNVQLCTAILKLAFPPRFIGSM. The helical transmembrane segment at 361–381 threads the bilayer; the sequence is YMFPLLYALFQSAEAGVFVLI. Over 382-437 the chain is Cytoplasmic; that stretch reads YKMYGSEILHKREALDEDDDTDISYKKLKEEELADTSYGTVGTDDLVLMETTQTSL.

Belongs to the bile acid:sodium symporter (BASS) (TC 2.A.28) family. Activated following N-terminal proteolytic cleavage by thrombin and/or proteases. Mainly expressed in the central nervous system cholinergic neurons. Expressed (at protein level) in motor regions of the spinal cord and rhombencephalon, in mesopontine cholinergic neurons, the medial habenula, cholinergic areas of the forebrain, and the gut myenteric plexus.

The protein resides in the cell membrane. Functionally, transporter for bile acids. The chain is Sodium/bile acid cotransporter 4 (Slc10a4) from Rattus norvegicus (Rat).